A 158-amino-acid chain; its full sequence is Transcriptional repressor NrdR (158 aa).

Residues 3–34 fold into a zinc finger; the sequence is CPFCSFPESRVLDSRPADEGNSIRRRRECGEC. Residues 49–139 form the ATP-cone domain; the sequence is LVVVKKDGRR…VYRQFGDIYS (91 aa).

This sequence belongs to the NrdR family. It depends on Zn(2+) as a cofactor.

Negatively regulates transcription of bacterial ribonucleotide reductase nrd genes and operons by binding to NrdR-boxes. This is Transcriptional repressor NrdR from Desulforamulus reducens (strain ATCC BAA-1160 / DSM 100696 / MI-1) (Desulfotomaculum reducens).